The following is a 191-amino-acid chain: Oleosin 20.3 kDa (191 aa).

N-acetylalanine is present on alanine 2. Residues 2–54 (ANVDRDRRVHVDRTDKRVHQPNYEDDVGFGGYGGYGAGSDYKSRGPSTNQILA) are polar. 2 consecutive transmembrane segments (helical) span residues 52 to 72 (ILAL…AGLT) and 99 to 119 (LTIG…LTGL). Residues 55–128 (LIAGVPIGGT…LSSVSWVLNY (74 aa)) form a hydrophobic region.

The protein belongs to the oleosin family.

The protein localises to the lipid droplet. It is found in the membrane. In terms of biological role, may have a structural role to stabilize the lipid body during desiccation of the seed by preventing coalescence of the oil. Probably interacts with both lipid and phospholipid moieties of lipid bodies. May also provide recognition signals for specific lipase anchorage in lipolysis during seedling growth. In Arabidopsis thaliana (Mouse-ear cress), this protein is Oleosin 20.3 kDa (OL2).